A 271-amino-acid chain; its full sequence is ATP synthase subunit a (271 aa).

Helical transmembrane passes span 40–60 (TINIDSMFFSVVLGLLFLVLF), 100–120 (LIAPLALTIFVWVFLMNLMDL), 146–166 (DVNVTLSMALGVFILILFYSI), 220–240 (LIFILIAGLLPWWSQWILNVP), and 242–262 (AIFHILIITLQAFIFMVLTIV).

This sequence belongs to the ATPase A chain family. F-type ATPases have 2 components, CF(1) - the catalytic core - and CF(0) - the membrane proton channel. CF(1) has five subunits: alpha(3), beta(3), gamma(1), delta(1), epsilon(1). CF(0) has three main subunits: a(1), b(2) and c(9-12). The alpha and beta chains form an alternating ring which encloses part of the gamma chain. CF(1) is attached to CF(0) by a central stalk formed by the gamma and epsilon chains, while a peripheral stalk is formed by the delta and b chains.

The protein localises to the cell inner membrane. Functionally, key component of the proton channel; it plays a direct role in the translocation of protons across the membrane. This is ATP synthase subunit a from Escherichia coli O1:K1 / APEC.